The primary structure comprises 285 residues: 2-oxoglutarate synthase subunit KorB (285 aa).

In terms of assembly, heterotetramer of the KorA, KorB, KorC and KorD subunits.

The enzyme catalyses 2 oxidized [2Fe-2S]-[ferredoxin] + 2-oxoglutarate + CoA = succinyl-CoA + 2 reduced [2Fe-2S]-[ferredoxin] + CO2 + H(+). The polypeptide is 2-oxoglutarate synthase subunit KorB (korB) (Methanothermobacter marburgensis (strain ATCC BAA-927 / DSM 2133 / JCM 14651 / NBRC 100331 / OCM 82 / Marburg) (Methanobacterium thermoautotrophicum)).